Here is an 89-residue protein sequence, read N- to C-terminus: Small ribosomal subunit protein uS15 (89 aa).

It belongs to the universal ribosomal protein uS15 family. In terms of assembly, part of the 30S ribosomal subunit. Forms a bridge to the 50S subunit in the 70S ribosome, contacting the 23S rRNA.

One of the primary rRNA binding proteins, it binds directly to 16S rRNA where it helps nucleate assembly of the platform of the 30S subunit by binding and bridging several RNA helices of the 16S rRNA. In terms of biological role, forms an intersubunit bridge (bridge B4) with the 23S rRNA of the 50S subunit in the ribosome. The polypeptide is Small ribosomal subunit protein uS15 (Lysinibacillus sphaericus (strain C3-41)).